We begin with the raw amino-acid sequence, 129 residues long: Ribosome-binding factor A (129 aa).

It belongs to the RbfA family. Monomer. Binds 30S ribosomal subunits, but not 50S ribosomal subunits or 70S ribosomes.

Its subcellular location is the cytoplasm. In terms of biological role, one of several proteins that assist in the late maturation steps of the functional core of the 30S ribosomal subunit. Associates with free 30S ribosomal subunits (but not with 30S subunits that are part of 70S ribosomes or polysomes). Required for efficient processing of 16S rRNA. May interact with the 5'-terminal helix region of 16S rRNA. This is Ribosome-binding factor A from Thioalkalivibrio sulfidiphilus (strain HL-EbGR7).